Here is a 402-residue protein sequence, read N- to C-terminus: S-adenosylmethionine synthase (402 aa).

Position 16 (His-16) interacts with ATP. A Mg(2+)-binding site is contributed by Asp-18. Glu-44 contributes to the K(+) binding site. Glu-57 and Gln-103 together coordinate L-methionine. The tract at residues Gln-103–Thr-113 is flexible loop. ATP is bound by residues Asp-178–Lys-180, Lys-249–Phe-250, Asp-258, Arg-264–Lys-265, Ala-281, and Lys-285. Asp-258 lines the L-methionine pocket. Lys-289 provides a ligand contact to L-methionine.

Belongs to the AdoMet synthase family. In terms of assembly, homotetramer; dimer of dimers. Mg(2+) serves as cofactor. K(+) is required as a cofactor.

The protein localises to the cytoplasm. The enzyme catalyses L-methionine + ATP + H2O = S-adenosyl-L-methionine + phosphate + diphosphate. Its pathway is amino-acid biosynthesis; S-adenosyl-L-methionine biosynthesis; S-adenosyl-L-methionine from L-methionine: step 1/1. In terms of biological role, catalyzes the formation of S-adenosylmethionine (AdoMet) from methionine and ATP. The overall synthetic reaction is composed of two sequential steps, AdoMet formation and the subsequent tripolyphosphate hydrolysis which occurs prior to release of AdoMet from the enzyme. The chain is S-adenosylmethionine synthase from Mycolicibacterium gilvum (strain PYR-GCK) (Mycobacterium gilvum (strain PYR-GCK)).